Reading from the N-terminus, the 404-residue chain is MHEMQGILLCSGGGTRMPVLTRHVQKCLLPVVGVPMFLYPLSSLLRTGITDIKIFVREVLQLTLEKEVKKSKLLEKYPAHIEYICVNQEDFGTADLLKNHHSKITKDALIVSCDFISDASLIPLVDFFRATNSTLVALIADTCVNAPAPGSKSKKPKATDVMAIVESTGQLAFLCGDDDFDAPLVMEKSLKIFPSIKLTSKYNDCHVYAIRHKVLLNLSKSKHISSFKADFVPLLIDKQFEPDSDIKCFAYRLPHENGFVTAHANTLGSYFEVNKAIQKSFTRLMEYRGNGKNFNYKTDKIAAHESRIEESAEIDKDSVIKRSFISDNCRIGEKTKLKESIIAKGVVIGNGASISNSIICDGVEIGENADVTNCIVAKDQKVPAKGKVQNEVVEDGEDEEWTDD.

Belongs to the eIF-2B gamma/epsilon subunits family. Component of the translation initiation factor 2B (eIF2B) complex which is a heterodecamer of two sets of five different subunits: alpha, beta, gamma, delta and epsilon. Subunits alpha, beta and delta comprise a regulatory subcomplex and subunits epsilon and gamma comprise a catalytic subcomplex. Within the complex, the hexameric regulatory complex resides at the center, with the two heterodimeric catalytic subcomplexes bound on opposite sides.

The protein localises to the cytoplasm. It is found in the cytosol. Acts as a component of the translation initiation factor 2B (eIF2B) complex, which catalyzes the exchange of GDP for GTP on the eukaryotic initiation factor 2 (eIF2) complex gamma subunit. Its guanine nucleotide exchange factor activity is repressed when bound to eIF2 complex phosphorylated on the alpha subunit, thereby limiting the amount of methionyl-initiator methionine tRNA available to the ribosome and consequently global translation is repressed. The sequence is that of Translation initiation factor eIF2B subunit gamma from Caenorhabditis elegans.